A 263-amino-acid chain; its full sequence is LIM and SH3 domain protein 1 (263 aa).

M1 is modified (N-acetylmethionine). Residues 5–56 (CARCGKIVYPTEKVNCLDKYWHKACFHCETCKMTLNMKNYKGYEKKPYCNAH) form the LIM zinc-binding domain. K42 bears the N6-acetyllysine mark. Nebulin repeat units follow at residues 61 to 95 (SFTM…KNKG) and 97 to 131 (GFSV…KSRM). Position 68 is a phosphothreonine (T68). An N6-methyllysine modification is found at K75. S99 carries the phosphoserine modification. T104 is modified (phosphothreonine). K112 carries the N6-succinyllysine modification. Phosphoserine is present on residues S118 and S134. The segment at 123-207 (HEEFEKSRMG…QRSAPGGGGK (85 aa)) is disordered. Positions 148–162 (DSSSYRRPTEQQQPQ) are enriched in polar residues. T156 is modified (phosphothreonine; by PKA). An SH3 domain is found at 204 to 263 (GGGKRYRAVYDYSAADEDEVSFQDGDTIVNVQQIDDGWMYGTVERTGDTGMLPANYVEAI).

Interacts with F-actin. Interacts with KBTBD10. Interacts with ANKRD54.

Its subcellular location is the cytoplasm. It localises to the cell cortex. It is found in the cytoskeleton. Functionally, plays an important role in the regulation of dynamic actin-based, cytoskeletal activities. Agonist-dependent changes in LASP1 phosphorylation may also serve to regulate actin-associated ion transport activities, not only in the parietal cell but also in certain other F-actin-rich secretory epithelial cell types. The protein is LIM and SH3 domain protein 1 (Lasp1) of Mus musculus (Mouse).